A 141-amino-acid polypeptide reads, in one-letter code: Large ribosomal subunit protein uL11 (141 aa).

The protein belongs to the universal ribosomal protein uL11 family. In terms of assembly, part of the ribosomal stalk of the 50S ribosomal subunit. Interacts with L10 and the large rRNA to form the base of the stalk. L10 forms an elongated spine to which L12 dimers bind in a sequential fashion forming a multimeric L10(L12)X complex. One or more lysine residues are methylated.

In terms of biological role, forms part of the ribosomal stalk which helps the ribosome interact with GTP-bound translation factors. In Clostridium novyi (strain NT), this protein is Large ribosomal subunit protein uL11.